We begin with the raw amino-acid sequence, 461 residues long: V-type ATP synthase beta chain (461 aa).

It belongs to the ATPase alpha/beta chains family.

Functionally, produces ATP from ADP in the presence of a proton gradient across the membrane. The V-type beta chain is a regulatory subunit. This chain is V-type ATP synthase beta chain, found in Clostridium botulinum (strain ATCC 19397 / Type A).